Reading from the N-terminus, the 501-residue chain is ATP synthase subunit alpha (501 aa).

169-176 (GDRQTGKT) contributes to the ATP binding site.

Belongs to the ATPase alpha/beta chains family. F-type ATPases have 2 components, CF(1) - the catalytic core - and CF(0) - the membrane proton channel. CF(1) has five subunits: alpha(3), beta(3), gamma(1), delta(1), epsilon(1). CF(0) has three main subunits: a(1), b(2) and c(9-12). The alpha and beta chains form an alternating ring which encloses part of the gamma chain. CF(1) is attached to CF(0) by a central stalk formed by the gamma and epsilon chains, while a peripheral stalk is formed by the delta and b chains.

The protein localises to the cell inner membrane. It catalyses the reaction ATP + H2O + 4 H(+)(in) = ADP + phosphate + 5 H(+)(out). Produces ATP from ADP in the presence of a proton gradient across the membrane. The alpha chain is a regulatory subunit. The protein is ATP synthase subunit alpha of Campylobacter lari (strain RM2100 / D67 / ATCC BAA-1060).